An 816-amino-acid polypeptide reads, in one-letter code: uncharacterized protein (816 aa).

D503–L534 contributes to the NADP(+) binding site. Substrate is bound at residue S641. Y661 acts as the Proton acceptor in catalysis. The next 2 membrane-spanning stretches (helical) occupy residues F743–L763 and V777–N797.

This sequence belongs to the short-chain dehydrogenases/reductases (SDR) family.

It localises to the membrane. This is an uncharacterized protein from Caenorhabditis elegans.